Consider the following 282-residue polypeptide: Glycine betaine transport system permease protein OpuAB (282 aa).

The Extracellular segment spans residues 1–18 (MDRLPRIPLADIIDRFVD). Residues 19–39 (WITMTFGGFFDGIANGLAAFV) traverse the membrane as a helical segment. Residues 40–44 (NGIVT) lie on the Cytoplasmic side of the membrane. Residues 45–65 (GLGFIPSILLTIIFAALAWWI) traverse the membrane as a helical segment. Topologically, residues 66-69 (STRG) are extracellular. Residues 70-90 (IALFTLIGFLLIDYLGYWDPM) form a helical membrane-spanning segment. The 180-residue stretch at 90-269 (MLQTLALVLT…IVAITLDRIT (180 aa)) folds into the ABC transmembrane type-1 domain. At 91 to 93 (LQT) the chain is on the cytoplasmic side. The chain crosses the membrane as a helical span at residues 94–114 (LALVLTSVIISIVVGVPIGIW). Residues 115 to 137 (ASQKETVRRIVTPILDLMQTMPA) lie on the Extracellular side of the membrane. A helical membrane pass occupies residues 138-158 (FVYLLPAIFFFNIGVVPGVVA). Residues 159 to 215 (SVIFAMPPTIRMTVLGIKQVPADLIEATEAFGSTTAQRLFKVQLPLATKTILAGINQ) are Cytoplasmic-facing. A helical transmembrane segment spans residues 216 to 236 (SIMLALSMVVIAAMVGAPGLG). Residues 237-242 (SEVYSA) are Extracellular-facing. A helical membrane pass occupies residues 243-263 (VTQLKTGVGVEAGIAIVIVAI). Topologically, residues 264-282 (TLDRITQNIKVKKKSRGNA) are cytoplasmic.

Belongs to the binding-protein-dependent transport system permease family. CysTW subfamily. As to quaternary structure, the complex is composed of two ATP-binding proteins (OpuAA), two transmembrane proteins (OpuAB) and a solute-binding protein (OpuAC).

It is found in the cell membrane. Functionally, involved in a multicomponent binding-protein-dependent transport system for glycine betaine; probably responsible for the translocation of the substrate across the membrane. In Bacillus subtilis (strain 168), this protein is Glycine betaine transport system permease protein OpuAB (opuAB).